The following is a 456-amino-acid chain: Arginine biosynthesis bifunctional protein ArgJ, mitochondrial (456 aa).

Substrate is bound by residues T184, K213, T224, E311, N451, and T456. The active-site Nucleophile is the T224.

It belongs to the ArgJ family. Heterodimer of an alpha and a beta chain. In terms of processing, the alpha and beta chains are autoproteolytically processed from a single precursor protein within the mitochondrion.

It localises to the mitochondrion matrix. The catalysed reaction is N(2)-acetyl-L-ornithine + L-glutamate = N-acetyl-L-glutamate + L-ornithine. It catalyses the reaction L-glutamate + acetyl-CoA = N-acetyl-L-glutamate + CoA + H(+). It functions in the pathway amino-acid biosynthesis; L-arginine biosynthesis; L-ornithine and N-acetyl-L-glutamate from L-glutamate and N(2)-acetyl-L-ornithine (cyclic): step 1/1. Its pathway is amino-acid biosynthesis; L-arginine biosynthesis; N(2)-acetyl-L-ornithine from L-glutamate: step 1/4. In terms of biological role, catalyzes two activities which are involved in the cyclic version of arginine biosynthesis: the synthesis of acetylglutamate from glutamate and acetyl-CoA, and of ornithine by transacetylation between acetylornithine and glutamate. The polypeptide is Arginine biosynthesis bifunctional protein ArgJ, mitochondrial (Aspergillus oryzae (strain ATCC 42149 / RIB 40) (Yellow koji mold)).